The chain runs to 276 residues: Energy-coupling factor transporter ATP-binding protein EcfA1 (276 aa).

An ABC transporter domain is found at Ile-2–Asp-237. Gly-37–Ser-44 provides a ligand contact to ATP.

It belongs to the ABC transporter superfamily. Energy-coupling factor EcfA family. In terms of assembly, forms a stable energy-coupling factor (ECF) transporter complex composed of 2 membrane-embedded substrate-binding proteins (S component), 2 ATP-binding proteins (A component) and 2 transmembrane proteins (T component).

Its subcellular location is the cell membrane. Functionally, ATP-binding (A) component of a common energy-coupling factor (ECF) ABC-transporter complex. Unlike classic ABC transporters this ECF transporter provides the energy necessary to transport a number of different substrates. This chain is Energy-coupling factor transporter ATP-binding protein EcfA1, found in Streptococcus thermophilus (strain CNRZ 1066).